The following is a 955-amino-acid chain: MSDYKSSLNLPSTQFSMKANLANREGKFLKKWQNDRLYDQIRKQNQGKPKFVLHDGPIYANGDIHIGHAVNKVLKDIIVKSKSLSGFDAPYVPGWDCHGLPIELNVEKEYGKVGIKIDVNTFRYKCREYADHQVMRQSQDFQRLGILSDWDNPYLTKDFKYEADVVRALGQVVKNGHVYKGHKPLHWCTECGSALAEAEVEYKNKQSEAIDVKFRIIEDSVFNVKKPVSVVIWTTTPWTLPANEAVALHSELNYVLVDIGSEYLLLSQSLVVNSISRYDIKVTIGERMFSSSELEGLKVQHPFYDKQVPIILGDHVTIDSGTGAVHIAPAHGQEDFIAGLKYNLPIDCPVDAKGVFFKEILLLGGQFIFKANASVIRILKETNTLVKHESLTHSYPHCWRHKTPIIFRITSQWFISMQQNGLRDIVNSEIQKVQWIPHWSKKRIELMVDNRPDWCISRQRFWGVPITLFVHKKTGELHPNTQMLFVCIANRIEQEGIEAWFKSDTKDFIGDDVNDYDKITDILDVWFDSGMSHFVVLKVRKELSNVADLYLEGSDQHRGWFQSSLISSVAINKKAPYKNVLTHGFVVDKDGKKMSKSLGNIISPQKIVNNVGADILRLWIASTDYTGEMTVSDEILKRSADSYRRIRNTMRFMLANMNGFTQKNLVDTKAMLDLDRWIVAKTQKIQEAIIENYDTYQFHYIVKSINNFCSNDLGGFYLDIIKDRQYTTQKDSPARRSAQTALYHITQMMVRWLSPILSFTSEEIWQELAPNKKSIFLQEWYLQVDTIDNVVFDDGIIYGTMISSHISQEQREGLEKSDDIFTSINIVRIISPTIRQAIEKLRKDKVLGASLEAEVDIYCNLKVKEKLSKFGEELRFMFITSDVRLHSFEEKPNNAIEVDSDVLQQVAIVVVKSEHSKCVRCWHHRKDVGSNNKYLELCCRCVENVDGDGEVRKFA.

A 'HIGH' region motif is present at residues 58-68; it reads IYANGDIHIGH. Glu-552 provides a ligand contact to L-isoleucyl-5'-AMP. The 'KMSKS' region motif lies at 593-597; sequence KMSKS. Lys-596 contributes to the ATP binding site. Residues Cys-918, Cys-921, Cys-938, and Cys-941 each contribute to the Zn(2+) site.

Belongs to the class-I aminoacyl-tRNA synthetase family. IleS type 1 subfamily. As to quaternary structure, monomer. It depends on Zn(2+) as a cofactor.

It is found in the cytoplasm. It carries out the reaction tRNA(Ile) + L-isoleucine + ATP = L-isoleucyl-tRNA(Ile) + AMP + diphosphate. Its function is as follows. Catalyzes the attachment of isoleucine to tRNA(Ile). As IleRS can inadvertently accommodate and process structurally similar amino acids such as valine, to avoid such errors it has two additional distinct tRNA(Ile)-dependent editing activities. One activity is designated as 'pretransfer' editing and involves the hydrolysis of activated Val-AMP. The other activity is designated 'posttransfer' editing and involves deacylation of mischarged Val-tRNA(Ile). The chain is Isoleucine--tRNA ligase from Vesicomyosocius okutanii subsp. Calyptogena okutanii (strain HA).